Consider the following 168-residue polypeptide: Endoribonuclease YbeY (168 aa).

Zn(2+) contacts are provided by H127, H131, and H137.

Belongs to the endoribonuclease YbeY family. It depends on Zn(2+) as a cofactor.

The protein resides in the cytoplasm. Single strand-specific metallo-endoribonuclease involved in late-stage 70S ribosome quality control and in maturation of the 3' terminus of the 16S rRNA. This is Endoribonuclease YbeY from Chromobacterium violaceum (strain ATCC 12472 / DSM 30191 / JCM 1249 / CCUG 213 / NBRC 12614 / NCIMB 9131 / NCTC 9757 / MK).